The primary structure comprises 161 residues: Large ribosomal subunit protein uL11 (161 aa).

This sequence belongs to the universal ribosomal protein uL11 family. In terms of assembly, part of the ribosomal stalk of the 50S ribosomal subunit. Interacts with L10 and the large rRNA to form the base of the stalk. L10 forms an elongated spine to which L12 dimers bind in a sequential fashion forming a multimeric L10(L12)X complex.

Forms part of the ribosomal stalk which helps the ribosome interact with GTP-bound translation factors. The sequence is that of Large ribosomal subunit protein uL11 from Methanocaldococcus jannaschii (strain ATCC 43067 / DSM 2661 / JAL-1 / JCM 10045 / NBRC 100440) (Methanococcus jannaschii).